The following is a 95-amino-acid chain: DNA-directed RNA polymerase subunit Rpo11 (95 aa).

Belongs to the archaeal Rpo11/eukaryotic RPB11/RPC19 RNA polymerase subunit family. Part of the RNA polymerase complex.

The protein resides in the cytoplasm. The catalysed reaction is RNA(n) + a ribonucleoside 5'-triphosphate = RNA(n+1) + diphosphate. DNA-dependent RNA polymerase (RNAP) catalyzes the transcription of DNA into RNA using the four ribonucleoside triphosphates as substrates. This Thermococcus onnurineus (strain NA1) protein is DNA-directed RNA polymerase subunit Rpo11.